Reading from the N-terminus, the 148-residue chain is Large ribosomal subunit protein bL9 (148 aa).

This sequence belongs to the bacterial ribosomal protein bL9 family.

Binds to the 23S rRNA. This Aliarcobacter butzleri (strain RM4018) (Arcobacter butzleri) protein is Large ribosomal subunit protein bL9.